The chain runs to 170 residues: Adenine phosphoribosyltransferase (170 aa).

The protein belongs to the purine/pyrimidine phosphoribosyltransferase family. Homodimer.

Its subcellular location is the cytoplasm. It catalyses the reaction AMP + diphosphate = 5-phospho-alpha-D-ribose 1-diphosphate + adenine. It participates in purine metabolism; AMP biosynthesis via salvage pathway; AMP from adenine: step 1/1. Functionally, catalyzes a salvage reaction resulting in the formation of AMP, that is energically less costly than de novo synthesis. This chain is Adenine phosphoribosyltransferase, found in Clostridioides difficile (strain 630) (Peptoclostridium difficile).